Consider the following 144-residue polypeptide: Putative pre-16S rRNA nuclease (144 aa).

Belongs to the YqgF nuclease family.

The protein localises to the cytoplasm. Could be a nuclease involved in processing of the 5'-end of pre-16S rRNA. This Lactiplantibacillus plantarum (strain ATCC BAA-793 / NCIMB 8826 / WCFS1) (Lactobacillus plantarum) protein is Putative pre-16S rRNA nuclease.